Consider the following 355-residue polypeptide: IGF-like family receptor 1 (355 aa).

Positions 1–22 are cleaved as a signal peptide; it reads MGPGRCLLTALLLLALAPPPEA. The Extracellular segment spans residues 23–163; sequence SQYCGRLEYW…PQQAWPNFLP (141 aa). Positions 120–147 are disordered; the sequence is KGHCPLTPGNPGAPSSQERSSPASSIAW. The segment covering 132–144 has biased composition (low complexity); that stretch reads APSSQERSSPASS. Residues 164 to 184 traverse the membrane as a helical segment; that stretch reads LVVLVLLLTLAVIAILLFILL. Topologically, residues 185–355 are cytoplasmic; the sequence is WHLCWPKEKA…KLGSSGVCWA (171 aa).

It is found in the cell membrane. In terms of biological role, probable cell membrane receptor for the IGF-like family proteins. Binds IGFL1 and IGFL3 with a higher affinity. May also bind IGFL2. The polypeptide is IGF-like family receptor 1 (IGFLR1) (Homo sapiens (Human)).